We begin with the raw amino-acid sequence, 535 residues long: uncharacterized protein (535 aa).

A helical membrane pass occupies residues 17 to 37 (IVLLCMIGFFCTTFMRIHFAL). 2 N-linked (GlcNAc...) asparagine glycosylation sites follow: Asn44 and Asn61. 6 helical membrane-spanning segments follow: residues 107–127 (LIFSGTFWGSLITVLPSMFFI), 144–164 (ILVTVITPFLATHFGYFSVFL), 167–187 (IGMGLGEGFVFPTNNAIIGNW), 199–219 (IFTLGNQIASAAGSPMVAAVC), 225–245 (WPATFYFAGIFATGWSILWFF), and 292–312 (AFLGQLQCHFFVNLFMTLFQI). A glycan (N-linked (GlcNAc...) asparagine) is linked at Asn329. 5 helical membrane-spanning segments follow: residues 331–351 (TFTAIPNIFNMIFKVVWGIGI), 368–388 (VSHGVASFGSSFSLILLAFFV), 395–415 (TGLIFFCLMYSSMGTFVSGFY), 429–451 (MSAISMFVAMIGRLTTPAVMSMF), and 463–483 (IFIGCSLAHIFSGSIFLLFGS).

The protein belongs to the major facilitator superfamily. Sodium/anion cotransporter family.

Its subcellular location is the membrane. This is an uncharacterized protein from Caenorhabditis elegans.